A 31-amino-acid chain; its full sequence is Basic phospholipase A2 13 (31 aa).

It belongs to the phospholipase A2 family. Group I subfamily. Ca(2+) serves as cofactor. Expressed by the venom gland.

Its subcellular location is the secreted. The enzyme catalyses a 1,2-diacyl-sn-glycero-3-phosphocholine + H2O = a 1-acyl-sn-glycero-3-phosphocholine + a fatty acid + H(+). Functionally, snake venom phospholipase A2 (PLA2) that inhibits neuromuscular transmission by blocking acetylcholine release from the nerve termini. PLA2 catalyzes the calcium-dependent hydrolysis of the 2-acyl groups in 3-sn-phosphoglycerides. The sequence is that of Basic phospholipase A2 13 from Bungarus fasciatus (Banded krait).